Reading from the N-terminus, the 193-residue chain is Nucleoside triphosphate pyrophosphatase (193 aa).

Aspartate 70 functions as the Proton acceptor in the catalytic mechanism.

This sequence belongs to the Maf family. The cofactor is a divalent metal cation.

Its subcellular location is the cytoplasm. It catalyses the reaction a ribonucleoside 5'-triphosphate + H2O = a ribonucleoside 5'-phosphate + diphosphate + H(+). The catalysed reaction is a 2'-deoxyribonucleoside 5'-triphosphate + H2O = a 2'-deoxyribonucleoside 5'-phosphate + diphosphate + H(+). Nucleoside triphosphate pyrophosphatase. May have a dual role in cell division arrest and in preventing the incorporation of modified nucleotides into cellular nucleic acids. This is Nucleoside triphosphate pyrophosphatase from Anaplasma phagocytophilum (strain HZ).